We begin with the raw amino-acid sequence, 715 residues long: Polyribonucleotide nucleotidyltransferase (715 aa).

Residues D489 and D495 each contribute to the Mg(2+) site. The KH domain occupies 556 to 615; the sequence is PRIETLRIPTEKIREVIGTGGKVIREICEKTGAKINIEDDGTVKVASSDGNSIKAAINWI. The S1 motif domain occupies 625–693; the sequence is GHIYDGTVVK…DRGKVRLSMR (69 aa).

Belongs to the polyribonucleotide nucleotidyltransferase family. The cofactor is Mg(2+).

The protein localises to the cytoplasm. It catalyses the reaction RNA(n+1) + phosphate = RNA(n) + a ribonucleoside 5'-diphosphate. Functionally, involved in mRNA degradation. Catalyzes the phosphorolysis of single-stranded polyribonucleotides processively in the 3'- to 5'-direction. This Beijerinckia indica subsp. indica (strain ATCC 9039 / DSM 1715 / NCIMB 8712) protein is Polyribonucleotide nucleotidyltransferase.